Here is a 473-residue protein sequence, read N- to C-terminus: Phosphoglucosamine mutase (473 aa).

The active-site Phosphoserine intermediate is serine 102. The Mg(2+) site is built by serine 102, aspartate 248, aspartate 250, and aspartate 252. Serine 102 bears the Phosphoserine mark.

Belongs to the phosphohexose mutase family. The cofactor is Mg(2+). Activated by phosphorylation.

The enzyme catalyses alpha-D-glucosamine 1-phosphate = D-glucosamine 6-phosphate. In terms of biological role, catalyzes the conversion of glucosamine-6-phosphate to glucosamine-1-phosphate. This is Phosphoglucosamine mutase from Rhodospirillum centenum (strain ATCC 51521 / SW).